The primary structure comprises 70 residues: UPF0426 protein ssl0294 (70 aa).

The protein belongs to the UPF0426 family.

This chain is UPF0426 protein ssl0294, found in Synechocystis sp. (strain ATCC 27184 / PCC 6803 / Kazusa).